A 436-amino-acid chain; its full sequence is UPF0597 protein YhaM (436 aa).

Belongs to the UPF0597 family.

The chain is UPF0597 protein YhaM from Escherichia coli (strain 55989 / EAEC).